A 181-amino-acid chain; its full sequence is Adenine phosphoribosyltransferase (181 aa).

This sequence belongs to the purine/pyrimidine phosphoribosyltransferase family. As to quaternary structure, homodimer.

It localises to the cytoplasm. The catalysed reaction is AMP + diphosphate = 5-phospho-alpha-D-ribose 1-diphosphate + adenine. It participates in purine metabolism; AMP biosynthesis via salvage pathway; AMP from adenine: step 1/1. Its function is as follows. Catalyzes a salvage reaction resulting in the formation of AMP, that is energically less costly than de novo synthesis. The sequence is that of Adenine phosphoribosyltransferase from Rhizobium leguminosarum bv. trifolii (strain WSM2304).